Reading from the N-terminus, the 947-residue chain is Bifunctional glutamine synthetase adenylyltransferase/adenylyl-removing enzyme (947 aa).

The interval M1 to E440 is adenylyl removase. Residues S450 to V947 form an adenylyl transferase region.

The protein belongs to the GlnE family. Mg(2+) is required as a cofactor.

The catalysed reaction is [glutamine synthetase]-O(4)-(5'-adenylyl)-L-tyrosine + phosphate = [glutamine synthetase]-L-tyrosine + ADP. The enzyme catalyses [glutamine synthetase]-L-tyrosine + ATP = [glutamine synthetase]-O(4)-(5'-adenylyl)-L-tyrosine + diphosphate. Involved in the regulation of glutamine synthetase GlnA, a key enzyme in the process to assimilate ammonia. When cellular nitrogen levels are high, the C-terminal adenylyl transferase (AT) inactivates GlnA by covalent transfer of an adenylyl group from ATP to specific tyrosine residue of GlnA, thus reducing its activity. Conversely, when nitrogen levels are low, the N-terminal adenylyl removase (AR) activates GlnA by removing the adenylyl group by phosphorolysis, increasing its activity. The regulatory region of GlnE binds the signal transduction protein PII (GlnB) which indicates the nitrogen status of the cell. The polypeptide is Bifunctional glutamine synthetase adenylyltransferase/adenylyl-removing enzyme (Salmonella paratyphi A (strain ATCC 9150 / SARB42)).